The chain runs to 339 residues: Dual specificity protein phosphatase 12 (339 aa).

N-acetylmethionine is present on Met1. A disordered region spans residues 1–25 (MLEAQGSNHGCERQAPTASPASSAG). A Tyrosine-protein phosphatase domain is found at 26–170 (HAVEVRPGLY…LKLYEAMGYE (145 aa)). The active-site Phosphocysteine intermediate is Cys114. 115–120 (HAGVSR) contributes to the substrate binding site. Residue Ser334 is modified to Phosphoserine.

The protein belongs to the protein-tyrosine phosphatase family. Non-receptor class dual specificity subfamily. As to quaternary structure, monomer. The cofactor is Zn(2+).

It localises to the nucleus. Its subcellular location is the cytoplasm. The protein localises to the cytosol. It catalyses the reaction O-phospho-L-tyrosyl-[protein] + H2O = L-tyrosyl-[protein] + phosphate. It carries out the reaction O-phospho-L-seryl-[protein] + H2O = L-seryl-[protein] + phosphate. The catalysed reaction is O-phospho-L-threonyl-[protein] + H2O = L-threonyl-[protein] + phosphate. In terms of biological role, dual specificity phosphatase; can dephosphorylate both phosphotyrosine and phosphoserine or phosphothreonine residues. Can dephosphorylate glucokinase (in vitro). Has phosphatase activity with the synthetic substrate 6,8-difluoro-4-methylumbelliferyl phosphate and other in vitro substrates. The protein is Dual specificity protein phosphatase 12 (Dusp12) of Mus musculus (Mouse).